The sequence spans 364 residues: N-alpha-acetyltransferase 30 (364 aa).

Residues 1-18 show a composition bias toward pro residues; sequence MAEVPPGPSSLLPPPAPA. Disordered regions lie at residues 1-21, 39-65, and 110-164; these read MAEV…AAPA, SEDE…TSAK, and EAAA…SDPA. A phosphoserine mark is found at serine 39 and serine 54. Positions 39-48 are enriched in acidic residues; sequence SEDEEDDEEH. A compositionally biased stretch (basic and acidic residues) spans 126–135; it reads AEGHPGERPP. The segment covering 152–164 has biased composition (low complexity); the sequence is AAAAAAGAASDPA. 3 positions are modified to phosphoserine: serine 192, serine 198, and serine 201. One can recognise an N-acetyltransferase domain in the interval 216–364; it reads RYVRYESELQ…DALRLKLWLR (149 aa). An N6-acetyllysine modification is found at lysine 235.

The protein belongs to the acetyltransferase family. MAK3 subfamily. As to quaternary structure, component of the N-terminal acetyltransferase C (NatC) complex, which is composed of NAA35, NAA38 and NAA30.

Its subcellular location is the cytoplasm. It is found in the nucleus. The enzyme catalyses N-terminal L-methionyl-L-leucyl-[protein] + acetyl-CoA = N-terminal N(alpha)-acetyl-L-methionyl-L-leucyl-[protein] + CoA + H(+). The catalysed reaction is N-terminal L-methionyl-L-isoleucyl-[protein] + acetyl-CoA = N-terminal N(alpha)-acetyl-L-methionyl-L-isoleucyl-[protein] + CoA + H(+). It catalyses the reaction N-terminal L-methionyl-L-phenylalanyl-[protein] + acetyl-CoA = N-terminal N(alpha)-acetyl-L-methionyl-L-phenylalanyl-[protein] + CoA + H(+). It carries out the reaction N-terminal L-methionyl-L-tryptophyl-[protein] + acetyl-CoA = N-terminal N(alpha)-acetyl-L-methionyl-L-tryptophyl-[protein] + CoA + H(+). The enzyme catalyses N-terminal L-methionyl-L-tyrosyl-[protein] + acetyl-CoA = N-terminal N(alpha)-acetyl-L-methionyl-L-tyrosyl-[protein] + CoA + H(+). Functionally, catalytic subunit of the N-terminal acetyltransferase C (NatC) complex. Catalyzes acetylation of the N-terminal methionine residues of peptides beginning with Met-Leu-Ala and Met-Leu-Gly. N-terminal acetylation protects proteins from ubiquitination and degradation by the N-end rule pathway. Necessary for the lysosomal localization and function of ARL8B sugeesting that ARL8B is a NatC substrate. The polypeptide is N-alpha-acetyltransferase 30 (Naa30) (Mus musculus (Mouse)).